Consider the following 353-residue polypeptide: Quinolinate synthase (353 aa).

The iminosuccinate site is built by H47 and S68. [4Fe-4S] cluster is bound at residue C113. Iminosuccinate contacts are provided by residues 139–141 (YAN) and S156. C200 is a [4Fe-4S] cluster binding site. Iminosuccinate contacts are provided by residues 226–228 (HPE) and T243. [4Fe-4S] cluster is bound at residue C297.

Belongs to the quinolinate synthase family. Type 1 subfamily. It depends on [4Fe-4S] cluster as a cofactor.

Its subcellular location is the cytoplasm. The catalysed reaction is iminosuccinate + dihydroxyacetone phosphate = quinolinate + phosphate + 2 H2O + H(+). Its pathway is cofactor biosynthesis; NAD(+) biosynthesis; quinolinate from iminoaspartate: step 1/1. Functionally, catalyzes the condensation of iminoaspartate with dihydroxyacetone phosphate to form quinolinate. The protein is Quinolinate synthase of Vibrio vulnificus (strain CMCP6).